We begin with the raw amino-acid sequence, 156 residues long: SsrA-binding protein (156 aa).

It belongs to the SmpB family.

The protein resides in the cytoplasm. Required for rescue of stalled ribosomes mediated by trans-translation. Binds to transfer-messenger RNA (tmRNA), required for stable association of tmRNA with ribosomes. tmRNA and SmpB together mimic tRNA shape, replacing the anticodon stem-loop with SmpB. tmRNA is encoded by the ssrA gene; the 2 termini fold to resemble tRNA(Ala) and it encodes a 'tag peptide', a short internal open reading frame. During trans-translation Ala-aminoacylated tmRNA acts like a tRNA, entering the A-site of stalled ribosomes, displacing the stalled mRNA. The ribosome then switches to translate the ORF on the tmRNA; the nascent peptide is terminated with the 'tag peptide' encoded by the tmRNA and targeted for degradation. The ribosome is freed to recommence translation, which seems to be the essential function of trans-translation. The sequence is that of SsrA-binding protein from Staphylococcus epidermidis (strain ATCC 35984 / DSM 28319 / BCRC 17069 / CCUG 31568 / BM 3577 / RP62A).